The sequence spans 398 residues: 1-deoxy-D-xylulose 5-phosphate reductoisomerase (398 aa).

NADPH-binding residues include threonine 10, glycine 11, serine 12, isoleucine 13, glycine 36, lysine 37, asparagine 38, and asparagine 124. Lysine 125 provides a ligand contact to 1-deoxy-D-xylulose 5-phosphate. NADPH is bound at residue glutamate 126. Aspartate 150 contacts Mn(2+). Serine 151, glutamate 152, serine 186, and histidine 209 together coordinate 1-deoxy-D-xylulose 5-phosphate. Glutamate 152 provides a ligand contact to Mn(2+). Glycine 215 provides a ligand contact to NADPH. 1-deoxy-D-xylulose 5-phosphate contacts are provided by serine 222, asparagine 227, lysine 228, and glutamate 231. Glutamate 231 lines the Mn(2+) pocket.

It belongs to the DXR family. Homodimer. It depends on Mg(2+) as a cofactor. Mn(2+) is required as a cofactor.

It carries out the reaction 2-C-methyl-D-erythritol 4-phosphate + NADP(+) = 1-deoxy-D-xylulose 5-phosphate + NADPH + H(+). The protein operates within isoprenoid biosynthesis; isopentenyl diphosphate biosynthesis via DXP pathway; isopentenyl diphosphate from 1-deoxy-D-xylulose 5-phosphate: step 1/6. Its function is as follows. Catalyzes the NADPH-dependent rearrangement and reduction of 1-deoxy-D-xylulose-5-phosphate (DXP) to 2-C-methyl-D-erythritol 4-phosphate (MEP). The protein is 1-deoxy-D-xylulose 5-phosphate reductoisomerase of Escherichia coli O157:H7.